A 298-amino-acid polypeptide reads, in one-letter code: tRNA pseudouridine synthase B (298 aa).

The active-site Nucleophile is the aspartate 44.

Belongs to the pseudouridine synthase TruB family. Type 1 subfamily.

The enzyme catalyses uridine(55) in tRNA = pseudouridine(55) in tRNA. Its function is as follows. Responsible for synthesis of pseudouridine from uracil-55 in the psi GC loop of transfer RNAs. In Mycobacteroides abscessus (strain ATCC 19977 / DSM 44196 / CCUG 20993 / CIP 104536 / JCM 13569 / NCTC 13031 / TMC 1543 / L948) (Mycobacterium abscessus), this protein is tRNA pseudouridine synthase B.